The chain runs to 183 residues: uncharacterized protein (183 aa).

Residues 1–36 (MAKRGNKKKQEAPLSLGKHTVGGRVGKPTNAKTGSA) form a disordered region. The region spanning 100–174 (TNVVIENLAP…FKLSCYIKKN (75 aa)) is the RRM domain.

The protein resides in the nucleus. The protein localises to the nucleolus. This is an uncharacterized protein from Schizosaccharomyces pombe (strain 972 / ATCC 24843) (Fission yeast).